A 98-amino-acid chain; its full sequence is Citrate lyase acyl carrier protein (98 aa).

Ser14 is modified (O-(phosphoribosyl dephospho-coenzyme A)serine).

The protein belongs to the CitD family. As to quaternary structure, oligomer with a subunit composition of (alpha,beta,gamma)6.

It is found in the cytoplasm. In terms of biological role, covalent carrier of the coenzyme of citrate lyase. The chain is Citrate lyase acyl carrier protein from Albidiferax ferrireducens (strain ATCC BAA-621 / DSM 15236 / T118) (Rhodoferax ferrireducens).